Here is a 379-residue protein sequence, read N- to C-terminus: UDP-4-amino-4-deoxy-L-arabinose--oxoglutarate aminotransferase (379 aa).

Position 182 is an N6-(pyridoxal phosphate)lysine (Lys-182).

This sequence belongs to the DegT/DnrJ/EryC1 family. ArnB subfamily. As to quaternary structure, homodimer. The cofactor is pyridoxal 5'-phosphate.

It catalyses the reaction UDP-4-amino-4-deoxy-beta-L-arabinose + 2-oxoglutarate = UDP-beta-L-threo-pentopyranos-4-ulose + L-glutamate. It participates in nucleotide-sugar biosynthesis; UDP-4-deoxy-4-formamido-beta-L-arabinose biosynthesis; UDP-4-deoxy-4-formamido-beta-L-arabinose from UDP-alpha-D-glucuronate: step 2/3. The protein operates within bacterial outer membrane biogenesis; lipopolysaccharide biosynthesis. Catalyzes the conversion of UDP-4-keto-arabinose (UDP-Ara4O) to UDP-4-amino-4-deoxy-L-arabinose (UDP-L-Ara4N). The modified arabinose is attached to lipid A and is required for resistance to polymyxin and cationic antimicrobial peptides. The sequence is that of UDP-4-amino-4-deoxy-L-arabinose--oxoglutarate aminotransferase from Escherichia coli O7:K1 (strain IAI39 / ExPEC).